The following is a 236-amino-acid chain: 7-cyano-7-deazaguanine synthase (236 aa).

21–31 (LSGGLDSATVL) lines the ATP pocket. Zn(2+) contacts are provided by cysteine 202, cysteine 212, cysteine 215, and cysteine 218.

Belongs to the QueC family. Zn(2+) serves as cofactor.

It carries out the reaction 7-carboxy-7-deazaguanine + NH4(+) + ATP = 7-cyano-7-deazaguanine + ADP + phosphate + H2O + H(+). Its pathway is purine metabolism; 7-cyano-7-deazaguanine biosynthesis. Its function is as follows. Catalyzes the ATP-dependent conversion of 7-carboxy-7-deazaguanine (CDG) to 7-cyano-7-deazaguanine (preQ(0)). This is 7-cyano-7-deazaguanine synthase from Frankia casuarinae (strain DSM 45818 / CECT 9043 / HFP020203 / CcI3).